We begin with the raw amino-acid sequence, 301 residues long: Diaminopimelate epimerase (301 aa).

Substrate is bound by residues Asn15, Gln47, and Asn67. The active-site Proton donor is Cys76. Substrate contacts are provided by residues 77–78 (GN), Asn163, Asn197, and 215–216 (ER). The active-site Proton acceptor is Cys224. Position 225 to 226 (225 to 226 (GS)) interacts with substrate.

It belongs to the diaminopimelate epimerase family. Homodimer.

Its subcellular location is the cytoplasm. The enzyme catalyses (2S,6S)-2,6-diaminopimelate = meso-2,6-diaminopimelate. It functions in the pathway amino-acid biosynthesis; L-lysine biosynthesis via DAP pathway; DL-2,6-diaminopimelate from LL-2,6-diaminopimelate: step 1/1. In terms of biological role, catalyzes the stereoinversion of LL-2,6-diaminopimelate (L,L-DAP) to meso-diaminopimelate (meso-DAP), a precursor of L-lysine and an essential component of the bacterial peptidoglycan. The polypeptide is Diaminopimelate epimerase (Rhizobium rhizogenes (strain K84 / ATCC BAA-868) (Agrobacterium radiobacter)).